The primary structure comprises 247 residues: TLC domain-containing protein 1 (247 aa).

Residues 1 to 27 (MPLLFHPAWPLLLGATLTFRALRRVLC) form the signal peptide. Topologically, residues 28–46 (RLPQPAHVQTDPLRTWRWH) are extracellular. Residues 40-234 (LRTWRWHNLL…LLRSDFCPER (195 aa)) enclose the TLC domain. Residues 47 to 67 (NLLVSFTHSIVSGIWALLCLW) form a helical membrane-spanning segment. Over 68–83 (QTPEMLVEIETAWSAS) the chain is Cytoplasmic. The chain crosses the membrane as a helical span at residues 84 to 104 (GYLLVCFSAGYFIHDTVDIVV). The Extracellular portion of the chain corresponds to 105 to 123 (SKQTRASWEYLVHHVMAMG). An intramembrane region (helical) is located at residues 124–144 (AFFSGIFWKRFVGGGVLTLLV). The Extracellular segment spans residues 145 to 173 (EVSNIFLTLRMMMKINNAQDLLLYKVNKY). A helical membrane pass occupies residues 174–194 (INLVMYFLFRLAPQAYLTKFF). Topologically, residues 195 to 201 (LQYAGQR) are cytoplasmic. The chain crosses the membrane as a helical span at residues 202–222 (TLGTFLLAILLMLDLMIIIYF). The Extracellular segment spans residues 223-247 (SRLLRSDFCPERAPRRQQKDKFLTE).

It is found in the cell membrane. Functionally, regulates the composition and fluidity of the plasma membrane. Inhibits the incorporation of membrane-fluidizing phospholipids containing omega-3 long-chain polyunsaturated fatty acids (LCPUFA) and thereby promotes membrane rigidity. Does not appear to have any effect on LCPUFA synthesis. This is TLC domain-containing protein 1 (Tlcd1) from Mus musculus (Mouse).